The sequence spans 424 residues: 23S rRNA (uracil(1939)-C(5))-methyltransferase RlmD (424 aa).

In terms of domain architecture, TRAM spans 1–56 (MEKFPAVTVFDLDYQGRGVAKIDGQVVFIEGALPDETVTFCKTSAKKQFIEAVVDE). [4Fe-4S] cluster is bound by residues Cys-69, Cys-75, Cys-78, and Cys-155. Gln-255, Phe-284, Asn-289, Glu-305, Asp-333, and Asp-354 together coordinate S-adenosyl-L-methionine. Cys-380 (nucleophile) is an active-site residue.

It belongs to the class I-like SAM-binding methyltransferase superfamily. RNA M5U methyltransferase family. RlmD subfamily.

It catalyses the reaction uridine(1939) in 23S rRNA + S-adenosyl-L-methionine = 5-methyluridine(1939) in 23S rRNA + S-adenosyl-L-homocysteine + H(+). Its function is as follows. Catalyzes the formation of 5-methyl-uridine at position 1939 (m5U1939) in 23S rRNA. The chain is 23S rRNA (uracil(1939)-C(5))-methyltransferase RlmD from Dichelobacter nodosus (strain VCS1703A).